Consider the following 473-residue polypeptide: Glutamate--tRNA ligase (473 aa).

The 'HIGH' region signature appears at 11–21 (PSPTGFLHIGG). The 'KMSKS' region motif lies at 240 to 244 (KLSKR). K243 is an ATP binding site.

Belongs to the class-I aminoacyl-tRNA synthetase family. Glutamate--tRNA ligase type 1 subfamily. As to quaternary structure, monomer.

Its subcellular location is the cytoplasm. It carries out the reaction tRNA(Glu) + L-glutamate + ATP = L-glutamyl-tRNA(Glu) + AMP + diphosphate. Its function is as follows. Catalyzes the attachment of glutamate to tRNA(Glu) in a two-step reaction: glutamate is first activated by ATP to form Glu-AMP and then transferred to the acceptor end of tRNA(Glu). This Rhodopseudomonas palustris (strain ATCC BAA-98 / CGA009) protein is Glutamate--tRNA ligase.